A 113-amino-acid polypeptide reads, in one-letter code: Iron-sulfur cluster insertion protein ErpA (113 aa).

3 residues coordinate iron-sulfur cluster: Cys-41, Cys-105, and Cys-107.

Belongs to the HesB/IscA family. As to quaternary structure, homodimer. Iron-sulfur cluster serves as cofactor.

In terms of biological role, required for insertion of 4Fe-4S clusters for at least IspG. The sequence is that of Iron-sulfur cluster insertion protein ErpA from Photobacterium profundum (strain SS9).